Here is a 565-residue protein sequence, read N- to C-terminus: Probable serine/threonine-protein kinase abkA (565 aa).

Residues 44–77 (NNNNISLKDKFKDLKDLKDNLNEKKINNDNDDDD) adopt a coiled-coil conformation. Positions 231–565 (LFQDDPIAAA…FKNIFYKNYK (335 aa)) constitute a Protein kinase domain. Residues 237-245 (IAAASIGQV) and Lys259 each bind ATP. Asp401 (proton acceptor) is an active-site residue.

It belongs to the protein kinase superfamily. ADCK protein kinase family.

The chain is Probable serine/threonine-protein kinase abkA (abkA) from Dictyostelium discoideum (Social amoeba).